The following is a 275-amino-acid chain: Glutamate racemase (275 aa).

Substrate contacts are provided by residues 12–13 (DS) and 44–45 (YG). Residue Cys75 is the Proton donor/acceptor of the active site. 76–77 (NT) contacts substrate. Cys185 (proton donor/acceptor) is an active-site residue. 186 to 187 (TH) provides a ligand contact to substrate.

The protein belongs to the aspartate/glutamate racemases family.

The enzyme catalyses L-glutamate = D-glutamate. The protein operates within cell wall biogenesis; peptidoglycan biosynthesis. Its function is as follows. Provides the (R)-glutamate required for cell wall biosynthesis. This is Glutamate racemase from Mycobacterium avium (strain 104).